We begin with the raw amino-acid sequence, 460 residues long: Jacalin-related lectin 36 (460 aa).

One can recognise a Jacalin-type lectin 1 domain in the interval 1-131 (MAAATMSWDD…LNSIDVHFAP (131 aa)). A2 carries the post-translational modification N-acetylalanine. 3 disordered regions span residues 34–57 (YDGD…VSLS), 133–162 (PSSS…WDDG), and 291–334 (SGRG…PHEG). The segment covering 133–143 (PSSSSSSSSLS) has biased composition (low complexity). The region spanning 145 to 289 (ANKVDAQGGK…LNALGAYFAP (145 aa)) is the Jacalin-type lectin 2 domain. The segment covering 292–309 (GRGTPSATQPPGSAQPTG) has biased composition (polar residues). The region spanning 313 to 457 (AKKLEAKGGN…IHQVGVHVKP (145 aa)) is the Jacalin-type lectin 3 domain.

This sequence belongs to the jacalin lectin family.

This Arabidopsis thaliana (Mouse-ear cress) protein is Jacalin-related lectin 36 (JAL36).